Reading from the N-terminus, the 475-residue chain is UDP-N-acetylmuramate--L-alanine ligase (475 aa).

114-120 (GTHGKTT) lines the ATP pocket.

Belongs to the MurCDEF family.

It localises to the cytoplasm. The catalysed reaction is UDP-N-acetyl-alpha-D-muramate + L-alanine + ATP = UDP-N-acetyl-alpha-D-muramoyl-L-alanine + ADP + phosphate + H(+). It functions in the pathway cell wall biogenesis; peptidoglycan biosynthesis. Its function is as follows. Cell wall formation. The protein is UDP-N-acetylmuramate--L-alanine ligase of Bartonella tribocorum (strain CIP 105476 / IBS 506).